We begin with the raw amino-acid sequence, 350 residues long: Phosphotriesterase-related protein (350 aa).

A divalent metal cation contacts are provided by His22, His24, Glu169, His201, His230, and Asp298.

Belongs to the metallo-dependent hydrolases superfamily. Phosphotriesterase family. The cofactor is a divalent metal cation.

This Drosophila yakuba (Fruit fly) protein is Phosphotriesterase-related protein.